Here is a 1151-residue protein sequence, read N- to C-terminus: Protein kinase C-like 1 (1151 aa).

2 consecutive REM-1 domains span residues 1 to 67 and 106 to 183; these read MSFS…KTAQ and KYDC…INVD. The interval 64–88 is disordered; it reads KTAQQSQGENGSEDNERCNSKEYGF. Residues 190–309 enclose the C2 domain; that stretch reads QPNDIMDNQQ…IRKKKAGQTN (120 aa). Ser-226 is modified (phosphoserine). A disordered region spans residues 306–331; sequence GQTNEQQGWVNASNINGGSSLASEEG. 2 consecutive Phorbol-ester/DAG-type zinc fingers follow at residues 414-461 and 481-531; these read GHHF…VTKC and PHRF…PDFC. 2 disordered regions span residues 546 to 620 and 649 to 669; these read QDTK…IIDK and AQQT…SNRR. Over residues 560–577 the composition is skewed to polar residues; the sequence is PSAQLGSSIGTANGSDLS. Residues 605 to 620 show a composition bias toward basic and acidic residues; it reads VGRDSPTKQHDPIIDK. Residue Ser-761 is modified to Phosphoserine. The segment at 782 to 816 is disordered; the sequence is LAPTSTHASRTTDQQSPQKSQTSTSAKHKKRAAKR. A compositionally biased stretch (low complexity) spans 792-806; the sequence is TTDQQSPQKSQTSTS. Residues 807 to 816 show a composition bias toward basic residues; the sequence is AKHKKRAAKR. The Protein kinase domain occupies 824–1083; sequence FVLLKVLGKG…ADEVMEEPFF (260 aa). ATP is bound by residues 830 to 838 and Lys-853; that span reads LGKGNFGKV. The active-site Proton acceptor is Asp-949. An AGC-kinase C-terminal domain is found at 1084–1151; sequence RNINFDDILN…FSFMPDDLDL (68 aa).

It belongs to the protein kinase superfamily. AGC Ser/Thr protein kinase family. PKC subfamily.

The catalysed reaction is L-seryl-[protein] + ATP = O-phospho-L-seryl-[protein] + ADP + H(+). The enzyme catalyses L-threonyl-[protein] + ATP = O-phospho-L-threonyl-[protein] + ADP + H(+). Its function is as follows. Required for cell growth and for the G2-&gt;M transition of the cell division cycle. Mediates a protein kinase cascade; it activates BCK1 which itself activates MKK1/MKK2. The sequence is that of Protein kinase C-like 1 (PKC1) from Saccharomyces cerevisiae (strain ATCC 204508 / S288c) (Baker's yeast).